The following is a 246-amino-acid chain: Probable transcriptional regulatory protein ESA_01378 (246 aa).

It belongs to the TACO1 family.

Its subcellular location is the cytoplasm. The sequence is that of Probable transcriptional regulatory protein ESA_01378 from Cronobacter sakazakii (strain ATCC BAA-894) (Enterobacter sakazakii).